The following is a 247-amino-acid chain: Uridylate kinase (247 aa).

An ATP-binding site is contributed by 16–19 (KLSG). UMP is bound at residue G58. Positions 59 and 63 each coordinate ATP. Residues D78 and 139–146 (TGNPFFTT) contribute to the UMP site. Residues T166, Y172, and D175 each contribute to the ATP site.

It belongs to the UMP kinase family. As to quaternary structure, homohexamer.

Its subcellular location is the cytoplasm. The catalysed reaction is UMP + ATP = UDP + ADP. It functions in the pathway pyrimidine metabolism; CTP biosynthesis via de novo pathway; UDP from UMP (UMPK route): step 1/1. Its activity is regulated as follows. Inhibited by UTP. Functionally, catalyzes the reversible phosphorylation of UMP to UDP. The chain is Uridylate kinase from Xylella fastidiosa (strain 9a5c).